The chain runs to 158 residues: Ribosome maturation factor RimP (158 aa).

This sequence belongs to the RimP family.

It localises to the cytoplasm. Functionally, required for maturation of 30S ribosomal subunits. This chain is Ribosome maturation factor RimP, found in Pseudomonas savastanoi pv. phaseolicola (strain 1448A / Race 6) (Pseudomonas syringae pv. phaseolicola (strain 1448A / Race 6)).